Reading from the N-terminus, the 137-residue chain is Peptide methionine sulfoxide reductase MsrB (137 aa).

The MsrB domain maps to 7–129 (PDHPATELNE…NSASLSFTDG (123 aa)). Zn(2+) contacts are provided by Cys46, Cys49, Cys95, and Cys98. The Nucleophile role is filled by Cys118.

The protein belongs to the MsrB Met sulfoxide reductase family. Zn(2+) is required as a cofactor.

The enzyme catalyses L-methionyl-[protein] + [thioredoxin]-disulfide + H2O = L-methionyl-(R)-S-oxide-[protein] + [thioredoxin]-dithiol. The polypeptide is Peptide methionine sulfoxide reductase MsrB (Serratia proteamaculans (strain 568)).